Reading from the N-terminus, the 80-residue chain is Exodeoxyribonuclease 7 small subunit (80 aa).

The protein belongs to the XseB family. As to quaternary structure, heterooligomer composed of large and small subunits.

It is found in the cytoplasm. It carries out the reaction Exonucleolytic cleavage in either 5'- to 3'- or 3'- to 5'-direction to yield nucleoside 5'-phosphates.. Bidirectionally degrades single-stranded DNA into large acid-insoluble oligonucleotides, which are then degraded further into small acid-soluble oligonucleotides. This is Exodeoxyribonuclease 7 small subunit from Citrobacter koseri (strain ATCC BAA-895 / CDC 4225-83 / SGSC4696).